The sequence spans 68 residues: Protein P33 (68 aa).

A coiled-coil region spans residues 34–63 (IVNLQGRIAELEARETEMLARVDTLIARLA).

Functionally, assembly protein. The sequence is that of Protein P33 (XXXIII) from Acinetobacter calcoaceticus (Arthrobacter siderocapsulatus).